A 1485-amino-acid chain; its full sequence is Cystic fibrosis transmembrane conductance regulator (1485 aa).

Residues 1-78 (MQRSPVEDAN…SLLRAMARCY (78 aa)) are Cytoplasmic-facing. A helical membrane pass occupies residues 79-99 (IKPFLLFGFLLYIGEATKTVQ). Residues 83-353 (LLFGFLLYIG…CMVLRMTVTR (271 aa)) enclose the ABC transmembrane type-1 1 domain. At 100–123 (PQLLGRIIASFDPAHEPERANGYF) the chain is on the extracellular side. The chain crosses the membrane as a helical span at residues 124-149 (LAFGLGLLFTARFLLLQPAMFGLHHL). The Cytoplasmic portion of the chain corresponds to 150 to 195 (GMQIRIALFSIIYKKTLKLSSRVLDKISTGQLVSLMSANLGKFDQS). Residues 196–216 (LGMAHFIWISPLQCILCTGLI) traverse the membrane as a helical segment. The Extracellular segment spans residues 217-224 (WELIDVNS). Residues 225-245 (FCALAAISLLGVLQAFLSHKM) traverse the membrane as a helical segment. The Cytoplasmic portion of the chain corresponds to 246-299 (GPYKAQKVLLTNKRLALTSEIMENLHSVKAYGWEEIMETLIKNIRQDEVKLTRK). A helical transmembrane segment spans residues 300 to 320 (IGSLRYFYSSAYFFSAIFVIV). The Extracellular portion of the chain corresponds to 321 to 340 (AAVVPHALSRGINLRRIFTT). A helical transmembrane segment spans residues 341–363 (LSYCMVLRMTVTRQLPGSIQMWY). At 364 to 856 (DTMRLIWKIE…YVRYVSNNKS (493 aa)) the chain is on the cytoplasmic side. Residues tryptophan 402, 457 to 464 (GSMGSGKS), and glutamine 492 each bind ATP. One can recognise an ABC transporter 1 domain in the interval 424 to 645 (NGDAGLFFTN…RPDFSSLLLG (222 aa)). The disordered R region stretch occupies residues 653–826 (SAERRCSILT…GILEEENIEA (174 aa)). Residues 857 to 877 (LLYVLIFILFIAAIEIAGSVA) form a helical membrane-spanning segment. Residues 860–1163 (VLIFILFIAA…CVATSIAVDG (304 aa)) enclose the ABC transmembrane type-1 2 domain. Residues 878 to 924 (GIFLITDELWREEHQRSEPNMTKHSNASSSGQTYAITVTPTSSYYIL) are Extracellular-facing. Residues asparagine 897 and asparagine 903 are each glycosylated (N-linked (GlcNAc...) asparagine). A discontinuously helical membrane pass occupies residues 925–946 (YIYVATSESLLAMGFFRGLPFV). The Cytoplasmic portion of the chain corresponds to 947–996 (HTTITISKKLHQKMLHAVLSAPMSVLNTMKTGRIMNRFTKDMATIDDMLP). Residues 997–1019 (LLMFDFVQLTVVVVGCILVVSIV) traverse the membrane as a helical segment. At 1020-1021 (RP) the chain is on the extracellular side. Residues 1022–1042 (YIFLAATPLAIIFIVMRKYFL) form a helical membrane-spanning segment. Residues 1043 to 1103 (RTGQQLKQLE…TATWFLYLST (61 aa)) are Cytoplasmic-facing. The chain crosses the membrane as a helical span at residues 1104–1124 (LRWFLFRADILFVFFFTLAAW). Over 1125-1138 (IAVGTNQDKPGEIG) the chain is Extracellular. The helical transmembrane segment at 1139 to 1159 (IIICLAMLILGTFQWCVATSI) threads the bilayer. Residues 1160–1485 (AVDGMMRSVD…AEDNIQDTRL (326 aa)) are Cytoplasmic-facing. One can recognise an ABC transporter 2 domain in the interval 1211-1444 (IEVRNLTVKY…TSHLKQAISP (234 aa)). ATP contacts are provided by residues tyrosine 1220 and 1245-1252 (GRTGSGKS). The interval 1452-1485 (PRRNSSMRTPQSKLSSVTQTLQEEAEDNIQDTRL) is disordered. Residues 1454–1473 (RNSSMRTPQSKLSSVTQTLQ) show a composition bias toward polar residues. The span at 1474 to 1485 (EEAEDNIQDTRL) shows a compositional bias: acidic residues. Residues 1483–1485 (TRL) carry the PDZ-binding motif.

It belongs to the ABC transporter superfamily. ABCC family. CFTR transporter (TC 3.A.1.202) subfamily. In terms of assembly, monomer; does not require oligomerization for channel activity. Interacts with cse1l; this interaction may down-regulate cftr activity. Phosphorylated; this activates the channel. Dephosphorylation strongly decreases ATPase activity. Phosphorylation at PKA sites activates the channel. Phosphorylation at PKC sites enhances the response to phosphorylation by PKA. Detected in gut epithelium (at protein level). Detected in kidney, spleen, intestine and liver. Detected in pancreatic duct epithelium at 5 dpf and throughout adult life.

It localises to the apical cell membrane. It is found in the early endosome membrane. The protein resides in the cell membrane. The protein localises to the recycling endosome membrane. Its subcellular location is the endoplasmic reticulum membrane. It carries out the reaction ATP + H2O + closed Cl(-) channel = ADP + phosphate + open Cl(-) channel.. The enzyme catalyses chloride(in) = chloride(out). The catalysed reaction is hydrogencarbonate(in) = hydrogencarbonate(out). It catalyses the reaction ATP + H2O = ADP + phosphate + H(+). Functionally, epithelial ion channel that plays an important role in the regulation of epithelial ion and water transport and fluid homeostasis. Mediates the transport of chloride ions across the cell membrane. Possesses an intrinsic ATPase activity and utilizes ATP to gate its channel; the passive flow of anions through the channel is gated by cycles of ATP binding and hydrolysis by the ATP-binding domains. The ion channel is also permeable to HCO(3)(-); selectivity depends on the extracellular chloride concentration. Exerts its function also by modulating the activity of other ion channels and transporters. Contributes to the regulation of the pH and the ion content of the epithelial fluid layer. Required for normal fluid homeostasis in the gut. Required for normal volume expansion and cell shape changes of Kupffer's vesicle during embryonic development and for normal establishment of left-right body patterning. Required for normal resistance to infection by P.aeruginosa strain PA14 and strain SMC573. The sequence is that of Cystic fibrosis transmembrane conductance regulator from Danio rerio (Zebrafish).